The following is a 232-amino-acid chain: Flagellar L-ring protein (232 aa).

A signal peptide spans 1–21 (MQKNAAHTYAISSLLVLSLTG). C22 carries the N-palmitoyl cysteine lipid modification. C22 is lipidated: S-diacylglycerol cysteine.

It belongs to the FlgH family. As to quaternary structure, the basal body constitutes a major portion of the flagellar organelle and consists of four rings (L,P,S, and M) mounted on a central rod.

It is found in the cell outer membrane. The protein localises to the bacterial flagellum basal body. Assembles around the rod to form the L-ring and probably protects the motor/basal body from shearing forces during rotation. This is Flagellar L-ring protein from Shigella boydii serotype 4 (strain Sb227).